The primary structure comprises 84 residues: Exodeoxyribonuclease 7 small subunit (84 aa).

Belongs to the XseB family. In terms of assembly, heterooligomer composed of large and small subunits.

The protein resides in the cytoplasm. It carries out the reaction Exonucleolytic cleavage in either 5'- to 3'- or 3'- to 5'-direction to yield nucleoside 5'-phosphates.. In terms of biological role, bidirectionally degrades single-stranded DNA into large acid-insoluble oligonucleotides, which are then degraded further into small acid-soluble oligonucleotides. This chain is Exodeoxyribonuclease 7 small subunit, found in Haemophilus influenzae (strain ATCC 51907 / DSM 11121 / KW20 / Rd).